We begin with the raw amino-acid sequence, 729 residues long: Palmitoyltransferase akr1 (729 aa).

The span at 1-11 shows a compositional bias: basic and acidic residues; sequence MVHHDGADAHA. A disordered region spans residues 1–28; sequence MVHHDGADAHAGHAAPAQPPMKSDTATP. Residues 1–297 lie on the Cytoplasmic side of the membrane; the sequence is MVHHDGADAH…DRRSFMTKFT (297 aa). ANK repeat units follow at residues 76-105, 110-139, 143-172, 176-205, and 209-238; these read EGIT…EINK, SVAT…DPLI, QGYN…PVDV, YGHT…SVHA, and QGFT…DRFA. The next 2 membrane-spanning stretches (helical) occupy residues 298-318 and 319-339; these read FLWP…MPVF and VGIP…QQVI. Over 340–354 the chain is Cytoplasmic; it reads AYAPPDMRQLQKTPW. A helical transmembrane segment spans residues 355–375; the sequence is MAGIFAGSLFLCIMNWLLHIF. The Lumenal portion of the chain corresponds to 376–383; it reads GSTMFGQD. Residues 384–404 form a helical membrane-spanning segment; the sequence is SAVIPNLLFAFFISMTIWFYI. The Cytoplasmic segment spans residues 405 to 483; that stretch reads RCMVDDPGFV…YNCIGVNNHR (79 aa). The region spanning 440-490 is the DHHC domain; it reads NFCVTCMIRTPLRSKHCRRCQRCVAKHDHHCPWVYNCIGVNNHRHFFFYLI. C470 functions as the S-palmitoyl cysteine intermediate in the catalytic mechanism. A helical transmembrane segment spans residues 484–504; sequence HFFFYLINLTLSVVTYDWLTY. Residues 505-534 lie on the Lumenal side of the membrane; the sequence is RYLSTLSETASDECNILAPSLCRIVNADTY. Residues 535–555 traverse the membrane as a helical segment; it reads SLLTAIWASLQLTWVSMLLFV. At 556-729 the chain is on the cytoplasmic side; it reads QFVQVSSAMT…GYESVAGEEV (174 aa). Disordered stretches follow at residues 587–620 and 709–729; these read STGA…HGHN and TSGG…GEEV. Residues 592–603 show a composition bias toward pro residues; it reads LNPPSLPAPGPS. Residues 611–620 are compositionally biased toward basic residues; that stretch reads HGGRHAHGHN.

The protein belongs to the DHHC palmitoyltransferase family. AKR/ZDHHC17 subfamily.

The protein resides in the early endosome membrane. It is found in the golgi apparatus membrane. The catalysed reaction is L-cysteinyl-[protein] + hexadecanoyl-CoA = S-hexadecanoyl-L-cysteinyl-[protein] + CoA. Its function is as follows. Palmitoyltransferase specific for casein kinase 1. The protein is Palmitoyltransferase akr1 (ptr-1) of Neurospora crassa (strain ATCC 24698 / 74-OR23-1A / CBS 708.71 / DSM 1257 / FGSC 987).